We begin with the raw amino-acid sequence, 269 residues long: 4-hydroxy-tetrahydrodipicolinate reductase (269 aa).

NAD(+) contacts are provided by residues Gly-11–Met-16 and Glu-37. NADP(+) is bound at residue Arg-38. NAD(+)-binding positions include Gly-101 to Thr-103 and Ala-125 to Met-128. The Proton donor/acceptor role is filled by His-158. A (S)-2,3,4,5-tetrahydrodipicolinate-binding site is contributed by His-159. Lys-162 serves as the catalytic Proton donor. Residue Gly-168–Thr-169 participates in (S)-2,3,4,5-tetrahydrodipicolinate binding.

The protein belongs to the DapB family.

It localises to the cytoplasm. It carries out the reaction (S)-2,3,4,5-tetrahydrodipicolinate + NAD(+) + H2O = (2S,4S)-4-hydroxy-2,3,4,5-tetrahydrodipicolinate + NADH + H(+). The enzyme catalyses (S)-2,3,4,5-tetrahydrodipicolinate + NADP(+) + H2O = (2S,4S)-4-hydroxy-2,3,4,5-tetrahydrodipicolinate + NADPH + H(+). It participates in amino-acid biosynthesis; L-lysine biosynthesis via DAP pathway; (S)-tetrahydrodipicolinate from L-aspartate: step 4/4. Functionally, catalyzes the conversion of 4-hydroxy-tetrahydrodipicolinate (HTPA) to tetrahydrodipicolinate. The protein is 4-hydroxy-tetrahydrodipicolinate reductase of Cereibacter sphaeroides (strain ATCC 17029 / ATH 2.4.9) (Rhodobacter sphaeroides).